A 274-amino-acid chain; its full sequence is Undecaprenyl-diphosphatase 1 (274 aa).

8 helical membrane passes run 7 to 27, 48 to 68, 88 to 108, 115 to 135, 151 to 171, 189 to 209, 221 to 241, and 253 to 273; these read LEIF…WLPV, FIST…LVIF, VRLW…GILF, LFFN…IMIG, VTYK…IPGT, YVAA…ASAL, FEWL…IVVI, and FKVF…YFFL.

The protein belongs to the UppP family.

It localises to the cell membrane. It catalyses the reaction di-trans,octa-cis-undecaprenyl diphosphate + H2O = di-trans,octa-cis-undecaprenyl phosphate + phosphate + H(+). In terms of biological role, catalyzes the dephosphorylation of undecaprenyl diphosphate (UPP). Confers resistance to bacitracin. The sequence is that of Undecaprenyl-diphosphatase 1 from Clostridioides difficile (strain 630) (Peptoclostridium difficile).